We begin with the raw amino-acid sequence, 112 residues long: Protein Churchill (112 aa).

Residues C2, C5, C30, C33, H59, C61, C64, H66, H71, C88, and C91 each contribute to the Zn(2+) site.

The protein belongs to the Churchill family.

In terms of biological role, transcriptional activator that mediates FGF signaling during neural development. Plays a role in the regulation of cell movement. Functionally, does not bind DNA by itself. This Homo sapiens (Human) protein is Protein Churchill (CHURC1).